A 265-amino-acid polypeptide reads, in one-letter code: Orphan methyltransferase M.BamHII (265 aa).

Belongs to the N(4)/N(6)-methyltransferase family. N(4) subfamily.

It catalyses the reaction a 2'-deoxycytidine in DNA + S-adenosyl-L-methionine = an N(4)-methyl-2'-deoxycytidine in DNA + S-adenosyl-L-homocysteine + H(+). A beta subtype methylase, recognizes the double-stranded sequence 5'-GGATCC-3', methylates C-? on both strands. No endonuclease has been identified for this methylase, although it is speculated it might protect against BamHI. In Bacillus amyloliquefaciens (Bacillus velezensis), this protein is Orphan methyltransferase M.BamHII (bamHIIM).